Reading from the N-terminus, the 298-residue chain is GTPase Era (298 aa).

Positions R8–E176 constitute an Era-type G domain. A G1 region spans residues G16–S23. A GTP-binding site is contributed by G16 to S23. The tract at residues Q42–H46 is G2. Residues D63 to G66 form a G3 region. GTP contacts are provided by residues D63–L67 and N125–D128. The tract at residues N125–D128 is G4. Positions V155–A157 are G5. Residues V199 to K283 form the KH type-2 domain.

It belongs to the TRAFAC class TrmE-Era-EngA-EngB-Septin-like GTPase superfamily. Era GTPase family. Monomer.

It localises to the cytoplasm. It is found in the cell inner membrane. An essential GTPase that binds both GDP and GTP, with rapid nucleotide exchange. Plays a role in 16S rRNA processing and 30S ribosomal subunit biogenesis and possibly also in cell cycle regulation and energy metabolism. In Xylella fastidiosa (strain M12), this protein is GTPase Era.